Here is a 130-residue protein sequence, read N- to C-terminus: HTH-type transcriptional regulator KmtR (130 aa).

An HTH arsR-type domain is found at 10–104 (LPDDQVCLVV…DAVFNAEHAG (95 aa)). Positions 44–67 (VNELAEQVGKPAPSVSQHLAKLRM) form a DNA-binding region, H-T-H motif. The interval 110 to 130 (HHRAAGGLQSVAKASATKDVG) is disordered.

With respect to regulation, binding to DNA is inhibited by nickel and cobalt ions. Functionally, represses expression of Rv2025c and its own expression. Acts by binding to the promoter regions. This is HTH-type transcriptional regulator KmtR (kmtR) from Mycobacterium tuberculosis (strain ATCC 25618 / H37Rv).